The following is a 144-amino-acid chain: 3-hydroxyacyl-[acyl-carrier-protein] dehydratase FabZ (144 aa).

His51 is a catalytic residue.

It belongs to the thioester dehydratase family. FabZ subfamily.

The protein localises to the cytoplasm. It catalyses the reaction a (3R)-hydroxyacyl-[ACP] = a (2E)-enoyl-[ACP] + H2O. Its function is as follows. Involved in unsaturated fatty acids biosynthesis. Catalyzes the dehydration of short chain beta-hydroxyacyl-ACPs and long chain saturated and unsaturated beta-hydroxyacyl-ACPs. This Clostridium botulinum (strain 657 / Type Ba4) protein is 3-hydroxyacyl-[acyl-carrier-protein] dehydratase FabZ.